We begin with the raw amino-acid sequence, 160 residues long: Ribonuclease P protein component 2 (160 aa).

It belongs to the eukaryotic/archaeal RNase P protein component 2 family. In terms of assembly, consists of a catalytic RNA component and at least 4-5 protein subunits.

The protein localises to the cytoplasm. The catalysed reaction is Endonucleolytic cleavage of RNA, removing 5'-extranucleotides from tRNA precursor.. Part of ribonuclease P, a protein complex that generates mature tRNA molecules by cleaving their 5'-ends. In Methanoculleus marisnigri (strain ATCC 35101 / DSM 1498 / JR1), this protein is Ribonuclease P protein component 2.